The chain runs to 329 residues: Large ribosomal subunit protein uL3 (329 aa).

The protein belongs to the universal ribosomal protein uL3 family. In terms of assembly, part of the 50S ribosomal subunit. Forms a cluster with proteins L14 and L24e.

In terms of biological role, one of the primary rRNA binding proteins, it binds directly near the 3'-end of the 23S rRNA, where it nucleates assembly of the 50S subunit. This chain is Large ribosomal subunit protein uL3, found in Picrophilus torridus (strain ATCC 700027 / DSM 9790 / JCM 10055 / NBRC 100828 / KAW 2/3).